The primary structure comprises 140 residues: Gonadotropin subunit beta-2 (140 aa).

The N-terminal stretch at 1–24 is a signal peptide; the sequence is MSVYPECTWLLFVCLCHLLVSAGG. 6 disulfide bridges follow: Cys-30–Cys-78, Cys-44–Cys-93, Cys-47–Cys-131, Cys-55–Cys-109, Cys-59–Cys-111, and Cys-114–Cys-121. An N-linked (GlcNAc...) asparagine glycan is attached at Asn-34.

It belongs to the glycoprotein hormones subunit beta family. As to quaternary structure, heterodimer of an alpha and a beta chain.

The protein resides in the secreted. In terms of biological role, involved in gametogenesis and steroidogenesis. In Anguilla anguilla (European freshwater eel), this protein is Gonadotropin subunit beta-2 (cgbb).